The chain runs to 378 residues: 3-dehydroquinate synthase (378 aa).

NAD(+) is bound by residues 115 to 119 (GVVGD), 139 to 140 (TS), Lys152, and Lys161. Glu194, His256, and His275 together coordinate Zn(2+).

The protein belongs to the sugar phosphate cyclases superfamily. Dehydroquinate synthase family. Co(2+) is required as a cofactor. It depends on Zn(2+) as a cofactor. NAD(+) serves as cofactor.

It localises to the cytoplasm. The catalysed reaction is 7-phospho-2-dehydro-3-deoxy-D-arabino-heptonate = 3-dehydroquinate + phosphate. The protein operates within metabolic intermediate biosynthesis; chorismate biosynthesis; chorismate from D-erythrose 4-phosphate and phosphoenolpyruvate: step 2/7. Catalyzes the conversion of 3-deoxy-D-arabino-heptulosonate 7-phosphate (DAHP) to dehydroquinate (DHQ). This is 3-dehydroquinate synthase from Brucella abortus biovar 1 (strain 9-941).